A 65-amino-acid chain; its full sequence is Metallothionein-like protein 3B (65 aa).

Belongs to the metallothionein superfamily. Type 15 family. In terms of tissue distribution, expressed in leaves and rachis.

Its function is as follows. Metallothioneins have a high content of cysteine residues that bind various heavy metals. In Oryza sativa subsp. japonica (Rice), this protein is Metallothionein-like protein 3B (MT3B).